The chain runs to 151 residues: Ribosome maturation factor RimP (151 aa).

It belongs to the RimP family.

Its subcellular location is the cytoplasm. Its function is as follows. Required for maturation of 30S ribosomal subunits. The polypeptide is Ribosome maturation factor RimP (Caldicellulosiruptor bescii (strain ATCC BAA-1888 / DSM 6725 / KCTC 15123 / Z-1320) (Anaerocellum thermophilum)).